A 144-amino-acid chain; its full sequence is Large ribosomal subunit protein uL16 (144 aa).

Residues methionine 1–glycine 19 are compositionally biased toward basic residues. The segment at methionine 1–glycine 23 is disordered.

The protein belongs to the universal ribosomal protein uL16 family. In terms of assembly, part of the 50S ribosomal subunit.

In terms of biological role, binds 23S rRNA and is also seen to make contacts with the A and possibly P site tRNAs. The chain is Large ribosomal subunit protein uL16 from Staphylococcus haemolyticus (strain JCSC1435).